Reading from the N-terminus, the 62-residue chain is MTQVILGENEGIESALRRFKRQVSQAGIFPDMKKHRHFETPIEKRKRKAMALQKQRKRRSRY.

A disordered region spans residues 43–62 (EKRKRKAMALQKQRKRRSRY). Residues 44-62 (KRKRKAMALQKQRKRRSRY) show a composition bias toward basic residues.

It belongs to the bacterial ribosomal protein bS21 family.

In Trichodesmium erythraeum (strain IMS101), this protein is Small ribosomal subunit protein bS21.